Here is a 483-residue protein sequence, read N- to C-terminus: Probable cytochrome P450 517A1 (483 aa).

Residues M1–K21 traverse the membrane as a helical segment. C429 serves as a coordination point for heme.

Belongs to the cytochrome P450 family. It depends on heme as a cofactor.

The protein localises to the membrane. This Dictyostelium discoideum (Social amoeba) protein is Probable cytochrome P450 517A1 (cyp517A1).